A 333-amino-acid polypeptide reads, in one-letter code: Ferrochelatase (333 aa).

Residues histidine 202 and glutamate 284 each coordinate Fe cation.

Belongs to the ferrochelatase family.

It is found in the cytoplasm. The enzyme catalyses heme b + 2 H(+) = protoporphyrin IX + Fe(2+). It functions in the pathway porphyrin-containing compound metabolism; protoheme biosynthesis; protoheme from protoporphyrin-IX: step 1/1. Catalyzes the ferrous insertion into protoporphyrin IX. The protein is Ferrochelatase of Francisella tularensis subsp. mediasiatica (strain FSC147).